A 342-amino-acid polypeptide reads, in one-letter code: Lipase B (342 aa).

An N-terminal signal peptide occupies residues 1–18 (MKLLSLTGVAGVLATCVA). A propeptide spanning residues 19 to 25 (ATPLVKR) is cleaved from the precursor. Cysteines 47 and 89 form a disulfide. A glycan (N-linked (GlcNAc...) asparagine) is linked at Asn99. Residues Ser130, Asp212, and His249 contribute to the active site. 2 disulfides stabilise this stretch: Cys241–Cys283 and Cys318–Cys336.

The enzyme catalyses a triacylglycerol + H2O = a diacylglycerol + a fatty acid + H(+). Functionally, hydrolysis of triglycerides. Is very stereospecific both in hydrolysis and in organic synthesis and has a potentially important application in glucolipid synthesis. In Pseudozyma antarctica (Yeast), this protein is Lipase B.